Reading from the N-terminus, the 150-residue chain is Oleosin Ara h 10.0102 (150 aa).

A run of 2 helical transmembrane segments spans residues 39 to 59 (VIAV…AGLA) and 73 to 93 (LFIL…LSVA).

It belongs to the oleosin family. As to expression, expressed in seeds (at protein level).

The protein resides in the lipid droplet. The protein localises to the membrane. May have a structural role to stabilize the lipid body during desiccation of the seed by preventing coalescence of the oil. Probably interacts with both lipid and phospholipid moieties of lipid bodies. May also provide recognition signals for specific lipase anchorage in lipolysis during seedling growth. The chain is Oleosin Ara h 10.0102 from Arachis hypogaea (Peanut).